The sequence spans 585 residues: uncharacterized protein (585 aa).

To E.coli YejM.

This is an uncharacterized protein from Haemophilus influenzae (strain ATCC 51907 / DSM 11121 / KW20 / Rd).